Reading from the N-terminus, the 316-residue chain is Ribonuclease Z (316 aa).

Positions 61, 63, 65, 66, 152, 220, and 279 each coordinate Zn(2+). D65 functions as the Proton acceptor in the catalytic mechanism.

It belongs to the RNase Z family. In terms of assembly, homodimer. The cofactor is Zn(2+).

The enzyme catalyses Endonucleolytic cleavage of RNA, removing extra 3' nucleotides from tRNA precursor, generating 3' termini of tRNAs. A 3'-hydroxy group is left at the tRNA terminus and a 5'-phosphoryl group is left at the trailer molecule.. Its function is as follows. Zinc phosphodiesterase, which displays some tRNA 3'-processing endonuclease activity. Probably involved in tRNA maturation, by removing a 3'-trailer from precursor tRNA. This is Ribonuclease Z from Clostridium perfringens (strain ATCC 13124 / DSM 756 / JCM 1290 / NCIMB 6125 / NCTC 8237 / Type A).